Consider the following 195-residue polypeptide: Imidazoleglycerol-phosphate dehydratase (195 aa).

It belongs to the imidazoleglycerol-phosphate dehydratase family.

The protein resides in the cytoplasm. It catalyses the reaction D-erythro-1-(imidazol-4-yl)glycerol 3-phosphate = 3-(imidazol-4-yl)-2-oxopropyl phosphate + H2O. It functions in the pathway amino-acid biosynthesis; L-histidine biosynthesis; L-histidine from 5-phospho-alpha-D-ribose 1-diphosphate: step 6/9. The polypeptide is Imidazoleglycerol-phosphate dehydratase (Citrifermentans bemidjiense (strain ATCC BAA-1014 / DSM 16622 / JCM 12645 / Bem) (Geobacter bemidjiensis)).